The sequence spans 422 residues: Dihydroorotase (422 aa).

Zn(2+) contacts are provided by histidine 53 and histidine 55. Substrate-binding positions include 55–57 (HFR) and asparagine 87. Glutamate 138, histidine 172, histidine 223, and aspartate 291 together coordinate Zn(2+). Aspartate 291 is a catalytic residue. A substrate-binding site is contributed by histidine 295.

This sequence belongs to the metallo-dependent hydrolases superfamily. DHOase family. Class I DHOase subfamily. Requires Zn(2+) as cofactor.

It carries out the reaction (S)-dihydroorotate + H2O = N-carbamoyl-L-aspartate + H(+). The protein operates within pyrimidine metabolism; UMP biosynthesis via de novo pathway; (S)-dihydroorotate from bicarbonate: step 3/3. Functionally, catalyzes the reversible cyclization of carbamoyl aspartate to dihydroorotate. This chain is Dihydroorotase, found in Halobacterium salinarum (strain ATCC 700922 / JCM 11081 / NRC-1) (Halobacterium halobium).